Consider the following 118-residue polypeptide: UPF0102 protein ROP_66030 (118 aa).

The protein belongs to the UPF0102 family.

This is UPF0102 protein ROP_66030 from Rhodococcus opacus (strain B4).